A 104-amino-acid chain; its full sequence is Large ribosomal subunit protein bL21 (104 aa).

Belongs to the bacterial ribosomal protein bL21 family. In terms of assembly, part of the 50S ribosomal subunit. Contacts protein L20.

Its function is as follows. This protein binds to 23S rRNA in the presence of protein L20. The sequence is that of Large ribosomal subunit protein bL21 from Moorella thermoacetica (strain ATCC 39073 / JCM 9320).